The chain runs to 306 residues: 5'-hydroxyaverantin dehydrogenase (306 aa).

Positions 25, 27, 48, 52, and 73 each coordinate NADP(+). Residue Ser-173 is the Proton donor of the active site. The NADP(+) site is built by Tyr-187, Lys-191, Val-220, and Thr-222. The active-site Proton acceptor is Tyr-187. Lys-191 serves as the catalytic Lowers pKa of active site Tyr.

Belongs to the short-chain dehydrogenases/reductases (SDR) family. In terms of assembly, homodimer.

Its subcellular location is the cytoplasm. The protein resides in the cytosol. The catalysed reaction is (1'S,5'S)-5'-hydroxyaverantin + NAD(+) = (S)-5'-oxoaverantin + NADH + H(+). It catalyses the reaction (1'S,5'R)-5'-hydroxyaverantin + NAD(+) = (S)-5'-oxoaverantin + NADH + 2 H(+). It participates in mycotoxin biosynthesis. In terms of biological role, 5'-hydroxyaverantin dehydrogenase; part of the fragmented gene cluster that mediates the biosynthesis of dothistromin (DOTH), a polyketide toxin very similar in structure to the aflatoxin precursor, versicolorin B. The first step of the pathway is the conversion of acetate to norsolorinic acid (NOR) and requires the fatty acid synthase subunits hexA and hexB, as well as the polyketide synthase pksA. PksA combines a hexanoyl starter unit and 7 malonyl-CoA extender units to synthesize the precursor NOR. The hexanoyl starter unit is provided to the acyl-carrier protein (ACP) domain by the fungal fatty acid synthase hexA/hexB. The second step is the conversion of NOR to averantin (AVN) and requires the norsolorinic acid ketoreductase nor1, which catalyzes the dehydration of norsolorinic acid to form (1'S)-averantin. The cytochrome P450 monooxygenase avnA then catalyzes the hydroxylation of AVN to 5'hydroxyaverantin (HAVN). The next step is performed by adhA that transforms HAVN to averufin (AVF). Averufin might then be converted to hydroxyversicolorone by cypX and avfA. Hydroxyversicolorone is further converted versiconal hemiacetal acetate (VHA) by moxY. VHA is then the substrate for the versiconal hemiacetal acetate esterase est1 to yield versiconal (VAL). Versicolorin B synthase vbsA then converts VAL to versicolorin B (VERB) by closing the bisfuran ring. Then, the activity of the versicolorin B desaturase verB leads to versicolorin A (VERA). DotB, a predicted chloroperoxidase, may perform epoxidation of the A-ring of VERA. Alternatively, a cytochrome P450, such as cypX or avnA could catalyze this step. It is also possible that another, uncharacterized, cytochrome P450 enzyme is responsible for this step. Opening of the epoxide could potentially be achieved by the epoxide hydrolase epoA. However, epoA seems not to be required for DOTH biosynthesis, but other epoxide hydrolases may have the ability to complement this hydrolysis. Alternatively, opening of the epoxide ring could be achieved non-enzymatically. The next step is the deoxygenation of ring A to yield the 5,8-dihydroxyanthraquinone which is most likely catalyzed by the NADPH dehydrogenase encoded by ver1. The last stages of DOTH biosynthesis are proposed to involve hydroxylation of the bisfuran. OrdB and norB might have oxidative roles here. An alternative possibility is that cytochrome P450 monoogenases such as avnA and cypX might perform these steps in addition to previously proposed steps. This chain is 5'-hydroxyaverantin dehydrogenase, found in Dothistroma septosporum (strain NZE10 / CBS 128990) (Red band needle blight fungus).